Consider the following 47-residue polypeptide: Large ribosomal subunit protein bL32c (47 aa).

It belongs to the bacterial ribosomal protein bL32 family.

It is found in the plastid. This chain is Large ribosomal subunit protein bL32c (rpl32), found in Prototheca wickerhamii.